The sequence spans 392 residues: 2'-deamino-2'-hydroxyneamine transaminase (392 aa).

Lysine 249 carries the N6-(pyridoxal phosphate)lysine modification.

This sequence belongs to the class-III pyridoxal-phosphate-dependent aminotransferase family. Requires pyridoxal 5'-phosphate as cofactor.

The catalysed reaction is neamine + 2-oxoglutarate = 6'-oxoparomamine + L-glutamate. It carries out the reaction 2'-deamino-2'-hydroxyneamine + 2-oxoglutarate = 2'-deamino-2'-hydroxy-6'-dehydroparomamine + L-glutamate. Its pathway is antibiotic biosynthesis; kanamycin biosynthesis. In terms of biological role, aminotransferase that has 6'-oxoglucosaminyl:L-glutamate aminotransferase activity by catalyzing pyridoxal-5'-phosphate-mediated transamination leading to the conversion of paromamine to neamine in the biosynthetic pathway of kanamycin B. In Streptomyces kanamyceticus, this protein is 2'-deamino-2'-hydroxyneamine transaminase (kacL).